We begin with the raw amino-acid sequence, 251 residues long: Hydroxyacylglutathione hydrolase (251 aa).

Residues histidine 53, histidine 55, aspartate 57, histidine 58, histidine 110, aspartate 127, and histidine 165 each contribute to the Zn(2+) site.

This sequence belongs to the metallo-beta-lactamase superfamily. Glyoxalase II family. Monomer. Zn(2+) is required as a cofactor.

The catalysed reaction is an S-(2-hydroxyacyl)glutathione + H2O = a 2-hydroxy carboxylate + glutathione + H(+). The protein operates within secondary metabolite metabolism; methylglyoxal degradation; (R)-lactate from methylglyoxal: step 2/2. In terms of biological role, thiolesterase that catalyzes the hydrolysis of S-D-lactoyl-glutathione to form glutathione and D-lactic acid. This is Hydroxyacylglutathione hydrolase from Salmonella typhi.